The following is a 911-amino-acid chain: Eukaryotic translation initiation factor 3 subunit C (911 aa).

Disordered stretches follow at residues 1–38 and 155–181; these read MSRFFANGSDSESESSEEEVQAPNFNKASAFQFSDDEE and SRFREAPDQESEAEDEEAHVSDAGEAA. Over residues 11 to 20 the composition is skewed to acidic residues; it reads SESESSEEEV. Polar residues predominate over residues 23-32; the sequence is PNFNKASAFQ. Phosphoserine occurs at positions 34, 165, 175, and 184. The segment covering 162–171 has biased composition (acidic residues); it reads DQESEAEDEE. A compositionally biased stretch (low complexity) spans 196–208; it reads APKIAKSAPAKSV. The tract at residues 196–284 is disordered; sequence APKIAKSAPA…KRAEDDEDGE (89 aa). Over residues 210–236 the composition is skewed to acidic residues; the sequence is ADDEDSDDSIDWDSDSESETESSEDEN. The segment covering 241 to 271 has biased composition (basic and acidic residues); the sequence is MRERFLKRSTEKGEDKGDDDKRKDKRKEQKL. The region spanning 642–818 is the PCI domain; the sequence is FHMHINLELL…ETVVMHRSEP (177 aa). Residues 851–911 form a disordered region; that stretch reads FQRGNMGNRG…QQQVQTIDEE (61 aa). Residues 885–896 are compositionally biased toward basic residues; that stretch reads QRNRNQRGHHKN. Low complexity predominate over residues 897–911; it reads QQQQQQQQVQTIDEE.

Belongs to the eIF-3 subunit C family. In terms of assembly, component of the eukaryotic translation initiation factor 3 (eIF-3) complex. The eIF-3 complex interacts with pix.

It is found in the cytoplasm. Functionally, component of the eukaryotic translation initiation factor 3 (eIF-3) complex, which is involved in protein synthesis of a specialized repertoire of mRNAs and, together with other initiation factors, stimulates binding of mRNA and methionyl-tRNAi to the 40S ribosome. The eIF-3 complex specifically targets and initiates translation of a subset of mRNAs involved in cell proliferation. The chain is Eukaryotic translation initiation factor 3 subunit C from Drosophila pseudoobscura pseudoobscura (Fruit fly).